We begin with the raw amino-acid sequence, 452 residues long: 23S rRNA (uracil(1939)-C(5))-methyltransferase RlmD (452 aa).

The disordered stretch occupies residues 1-23 (MSRKKSNGGLRFQPAGGNRATQI). In terms of domain architecture, TRAM spans 22–80 (QIPVGKKQRLLIERVAGDGRGIAFIEGRTWFVSGALGGEEVEARVLGARGKVVEARLER). [4Fe-4S] cluster-binding residues include Cys-93, Cys-99, Cys-102, and Cys-181. S-adenosyl-L-methionine is bound by residues Gln-285, Phe-314, Asn-319, Glu-335, Asp-362, and Asp-383. The active-site Nucleophile is the Cys-409.

The protein belongs to the class I-like SAM-binding methyltransferase superfamily. RNA M5U methyltransferase family. RlmD subfamily.

It catalyses the reaction uridine(1939) in 23S rRNA + S-adenosyl-L-methionine = 5-methyluridine(1939) in 23S rRNA + S-adenosyl-L-homocysteine + H(+). Catalyzes the formation of 5-methyl-uridine at position 1939 (m5U1939) in 23S rRNA. The chain is 23S rRNA (uracil(1939)-C(5))-methyltransferase RlmD from Pseudomonas entomophila (strain L48).